Here is an 810-residue protein sequence, read N- to C-terminus: Phenylalanine--tRNA ligase beta subunit (810 aa).

Residues 39–150 (RTWANGVVVG…ENLPLGSDVR (112 aa)) enclose the tRNA-binding domain. The 85-residue stretch at 411–495 (TWSRSIFLRL…RLYGYDNFCD (85 aa)) folds into the B5 domain. Mg(2+)-binding residues include aspartate 473, aspartate 479, glutamate 482, and glutamate 483. The region spanning 716 to 809 (STYPASDRDI…LVEKFGVNLR (94 aa)) is the FDX-ACB domain.

Belongs to the phenylalanyl-tRNA synthetase beta subunit family. Type 1 subfamily. In terms of assembly, tetramer of two alpha and two beta subunits. The cofactor is Mg(2+).

Its subcellular location is the cytoplasm. The enzyme catalyses tRNA(Phe) + L-phenylalanine + ATP = L-phenylalanyl-tRNA(Phe) + AMP + diphosphate + H(+). The polypeptide is Phenylalanine--tRNA ligase beta subunit (Trichormus variabilis (strain ATCC 29413 / PCC 7937) (Anabaena variabilis)).